Here is a 246-residue protein sequence, read N- to C-terminus: Isoamyl acetate-hydrolyzing esterase (246 aa).

The Nucleophile role is filled by S46. The active-site Proton donor is the D201. The active-site Proton acceptor is H204.

This sequence belongs to the 'GDSL' lipolytic enzyme family. IAH1 subfamily.

Its subcellular location is the cytoplasm. The catalysed reaction is 3-methylbutyl acetate + H2O = 3-methylbutanol + acetate + H(+). The chain is Isoamyl acetate-hydrolyzing esterase (iah1) from Schizosaccharomyces pombe (strain 972 / ATCC 24843) (Fission yeast).